The following is a 138-amino-acid chain: Large ribosomal subunit protein uL16 (138 aa).

The span at 1–13 (MLQPKRRKYRKEQ) shows a compositional bias: basic residues. The disordered stretch occupies residues 1 to 24 (MLQPKRRKYRKEQKGRNTGKATRG).

The protein belongs to the universal ribosomal protein uL16 family. As to quaternary structure, part of the 50S ribosomal subunit.

In terms of biological role, binds 23S rRNA and is also seen to make contacts with the A and possibly P site tRNAs. The polypeptide is Large ribosomal subunit protein uL16 (Burkholderia lata (strain ATCC 17760 / DSM 23089 / LMG 22485 / NCIMB 9086 / R18194 / 383)).